The following is a 183-amino-acid chain: Probable GTP-binding protein EngB (183 aa).

The 166-residue stretch at 18–183 (DQNEIVFWGR…LSDLVEHFEL (166 aa)) folds into the EngB-type G domain. Residues 26–33 (GRSNVGKS), 52–56 (GRTRL), 70–73 (DLPG), 137–140 (TKID), and 166–168 (VSS) contribute to the GTP site. 2 residues coordinate Mg(2+): Ser-33 and Thr-54.

It belongs to the TRAFAC class TrmE-Era-EngA-EngB-Septin-like GTPase superfamily. EngB GTPase family. It depends on Mg(2+) as a cofactor.

Its function is as follows. Necessary for normal cell division and for the maintenance of normal septation. This is Probable GTP-binding protein EngB from Metamycoplasma arthritidis (strain 158L3-1) (Mycoplasma arthritidis).